We begin with the raw amino-acid sequence, 371 residues long: Flagellar P-ring protein (371 aa).

The first 28 residues, 1-28 (MPARPTPPAVPLALALAAALAAPAPAAA), serve as a signal peptide directing secretion.

This sequence belongs to the FlgI family. The basal body constitutes a major portion of the flagellar organelle and consists of four rings (L,P,S, and M) mounted on a central rod.

It is found in the periplasm. The protein localises to the bacterial flagellum basal body. In terms of biological role, assembles around the rod to form the L-ring and probably protects the motor/basal body from shearing forces during rotation. The sequence is that of Flagellar P-ring protein from Anaeromyxobacter dehalogenans (strain 2CP-C).